The following is a 182-amino-acid chain: Peptidyl-tRNA hydrolase (182 aa).

Position 14 (tyrosine 14) interacts with tRNA. Histidine 19 acts as the Proton acceptor in catalysis. The tRNA site is built by phenylalanine 64, asparagine 66, and asparagine 112.

This sequence belongs to the PTH family. As to quaternary structure, monomer.

The protein resides in the cytoplasm. The enzyme catalyses an N-acyl-L-alpha-aminoacyl-tRNA + H2O = an N-acyl-L-amino acid + a tRNA + H(+). Hydrolyzes ribosome-free peptidyl-tRNAs (with 1 or more amino acids incorporated), which drop off the ribosome during protein synthesis, or as a result of ribosome stalling. Its function is as follows. Catalyzes the release of premature peptidyl moieties from peptidyl-tRNA molecules trapped in stalled 50S ribosomal subunits, and thus maintains levels of free tRNAs and 50S ribosomes. The sequence is that of Peptidyl-tRNA hydrolase from Wolbachia sp. subsp. Brugia malayi (strain TRS).